Reading from the N-terminus, the 337-residue chain is Fructose-1,6-bisphosphatase class 1 (337 aa).

The Mg(2+) site is built by Glu-92, Asp-114, Leu-116, and Asp-117. Residues 117 to 120, Asn-209, and Lys-275 contribute to the substrate site; that span reads DGSS. Position 281 (Glu-281) interacts with Mg(2+).

This sequence belongs to the FBPase class 1 family. Homotetramer. Mg(2+) is required as a cofactor.

The protein localises to the cytoplasm. The catalysed reaction is beta-D-fructose 1,6-bisphosphate + H2O = beta-D-fructose 6-phosphate + phosphate. Its pathway is carbohydrate biosynthesis; gluconeogenesis. This is Fructose-1,6-bisphosphatase class 1 from Thiobacillus denitrificans (strain ATCC 25259 / T1).